A 179-amino-acid polypeptide reads, in one-letter code: ATP synthase subunit delta (179 aa).

Belongs to the ATPase delta chain family. In terms of assembly, F-type ATPases have 2 components, F(1) - the catalytic core - and F(0) - the membrane proton channel. F(1) has five subunits: alpha(3), beta(3), gamma(1), delta(1), epsilon(1). F(0) has three main subunits: a(1), b(2) and c(10-14). The alpha and beta chains form an alternating ring which encloses part of the gamma chain. F(1) is attached to F(0) by a central stalk formed by the gamma and epsilon chains, while a peripheral stalk is formed by the delta and b chains.

Its subcellular location is the cell membrane. F(1)F(0) ATP synthase produces ATP from ADP in the presence of a proton or sodium gradient. F-type ATPases consist of two structural domains, F(1) containing the extramembraneous catalytic core and F(0) containing the membrane proton channel, linked together by a central stalk and a peripheral stalk. During catalysis, ATP synthesis in the catalytic domain of F(1) is coupled via a rotary mechanism of the central stalk subunits to proton translocation. In terms of biological role, this protein is part of the stalk that links CF(0) to CF(1). It either transmits conformational changes from CF(0) to CF(1) or is implicated in proton conduction. The protein is ATP synthase subunit delta of Ureaplasma urealyticum serovar 10 (strain ATCC 33699 / Western).